The primary structure comprises 300 residues: Diaminopimelate epimerase (300 aa).

Substrate is bound by residues Asn15, Gln47, and Asn67. Cys76 functions as the Proton donor in the catalytic mechanism. Residues 77-78 (GN), Asn163, Asn197, and 215-216 (ER) contribute to the substrate site. Cys224 serves as the catalytic Proton acceptor. 225–226 (GS) serves as a coordination point for substrate. The disordered stretch occupies residues 275-300 (SGTFDPATGEWSRDAQNDKPTDRGAA). The span at 285–300 (WSRDAQNDKPTDRGAA) shows a compositional bias: basic and acidic residues.

It belongs to the diaminopimelate epimerase family. As to quaternary structure, homodimer.

It localises to the cytoplasm. The enzyme catalyses (2S,6S)-2,6-diaminopimelate = meso-2,6-diaminopimelate. It functions in the pathway amino-acid biosynthesis; L-lysine biosynthesis via DAP pathway; DL-2,6-diaminopimelate from LL-2,6-diaminopimelate: step 1/1. Functionally, catalyzes the stereoinversion of LL-2,6-diaminopimelate (L,L-DAP) to meso-diaminopimelate (meso-DAP), a precursor of L-lysine and an essential component of the bacterial peptidoglycan. In Brucella anthropi (strain ATCC 49188 / DSM 6882 / CCUG 24695 / JCM 21032 / LMG 3331 / NBRC 15819 / NCTC 12168 / Alc 37) (Ochrobactrum anthropi), this protein is Diaminopimelate epimerase.